The chain runs to 262 residues: ATP synthase subunit a (262 aa).

7 helical membrane passes run 30-50 (ITSL…LTIF), 64-84 (WNIV…DQIG), 91-111 (LIYF…NILG), 123-143 (ISVT…IGFS), 149-169 (FFSL…LVLI), 195-215 (LFGV…SILL), and 220-240 (IGLP…VALL).

It belongs to the ATPase A chain family. In terms of assembly, F-type ATPases have 2 components, CF(1) - the catalytic core - and CF(0) - the membrane proton channel. CF(1) has five subunits: alpha(3), beta(3), gamma(1), delta(1), epsilon(1). CF(0) has three main subunits: a, b and c.

The protein resides in the mitochondrion inner membrane. In terms of biological role, mitochondrial membrane ATP synthase (F(1)F(0) ATP synthase or Complex V) produces ATP from ADP in the presence of a proton gradient across the membrane which is generated by electron transport complexes of the respiratory chain. F-type ATPases consist of two structural domains, F(1) - containing the extramembraneous catalytic core and F(0) - containing the membrane proton channel, linked together by a central stalk and a peripheral stalk. During catalysis, ATP synthesis in the catalytic domain of F(1) is coupled via a rotary mechanism of the central stalk subunits to proton translocation. Key component of the proton channel; it may play a direct role in the translocation of protons across the membrane. The protein is ATP synthase subunit a (ATP6) of Allomyces arbusculus (Aquatic fungus).